Reading from the N-terminus, the 871-residue chain is MFSSDELRENYLKFFEEKGHKRIASSSLIPHNDPTLLLTTAGMVQFKPYYLGVAKPENSRMTSCQKCFRTTDIESVGDASHLTMFEMLGNFSIGNYFKKEAIAWAWEYVTQRLNIPAEKLWVTVYLDDDEAIALWKEQGVPEGRIVRLGAADNFWGPAGDSGPCGPCSEIHYDFGQEMGCGKADCNPSCKCGRFCEIWNLVFVQFNQDKSGKRQNLPAPSIDTGMGLERLTILMQFRKNVYETDIFAPVIEKACQLSGRQYGIDAETDKALRIVSEHSRGITFLIADGVIPDKAGRGYVLRRLLRRAVLFGRRLGLEKPFLVDMAGAVIARMSGIYPELNKRQAYVLEMIASEEARFSETLATGLELLEEIVRQTKGGQISGQDAFKLYDTYGFPVEMTTEIAAERGLSVDLGGFEAEMEVQRTKARSSRKFSFDAAATAEAVKNMRHGEKTCFVGYELTRQKSTIMDILTEGGSVDSIEEGDEASIVLDESPFYAEMGGQVGDTGEIITGGGRFEVKNTLHLPNGVFLHQGRVISGCLKIAETAAAHIDEERRRDIARNHTATHILQTALRQVLGEQVQQRGSVVTPERLRFDFSHLKPMTKDEIRRAEEFVNDKIRRNLPVYAEEMPYRHALEEGVTALFGEKYGDRVRVLRVGRPAVSAELCGGTHVSASGEISLFKIVSESSVGAGLRRIEAVTGREAEAYINLQQDSLSELSGMLEAAPEESPRKLAELKEEIDTLKKTVQNLERQMSRGEAEELLSKAEDYKGIKLLVSRMTSVNADTLHETADFLRDKLGSGIIVLGTVSEDKPFFLCMVTPDLIEKGYHAGNIVKKLSQIAGGGGGGKPNMAQGGGRDKAKLDEALQAVKGML.

Positions 561, 565, 665, and 669 each coordinate Zn(2+).

Belongs to the class-II aminoacyl-tRNA synthetase family. Requires Zn(2+) as cofactor.

The protein resides in the cytoplasm. The enzyme catalyses tRNA(Ala) + L-alanine + ATP = L-alanyl-tRNA(Ala) + AMP + diphosphate. Catalyzes the attachment of alanine to tRNA(Ala) in a two-step reaction: alanine is first activated by ATP to form Ala-AMP and then transferred to the acceptor end of tRNA(Ala). Also edits incorrectly charged Ser-tRNA(Ala) and Gly-tRNA(Ala) via its editing domain. In Dehalococcoides mccartyi (strain ATCC BAA-2266 / KCTC 15142 / 195) (Dehalococcoides ethenogenes (strain 195)), this protein is Alanine--tRNA ligase.